Consider the following 269-residue polypeptide: Aquaporin-1 (269 aa).

At 1–11 (MASEIKKKLFW) the chain is on the cytoplasmic side. A helical transmembrane segment spans residues 12 to 29 (RAVVAEFLAMTLFVFISI). Over 30-46 (GSALGFNYPLERNQTLV) the chain is Extracellular. An N-linked (GlcNAc...) asparagine glycan is attached at Asn42. The helical transmembrane segment at 47–65 (QDNVKVSLAFGLSIATLAQ) threads the bilayer. Over 66-68 (SVG) the chain is Cytoplasmic. The stretch at 69–82 (HISGAHLNPAVTLG) is an intramembrane region. Residues 76–78 (NPA) carry the NPA 1 motif. Over 83 to 90 (LLLSCQIS) the chain is Cytoplasmic. The helical transmembrane segment at 91–109 (ILRAVMYIIAQCVGAIVAS) threads the bilayer. Residues 110–133 (AILSGITSSLLENSLGRNDLARGV) are Extracellular-facing. A helical membrane pass occupies residues 134–153 (NSGQGLGIEIIGTLQLVLCV). Over 154–163 (LATTDRRRRD) the chain is Cytoplasmic. The chain crosses the membrane as a helical span at residues 164-181 (LGGSAPLAIGLSVALGHL). Residues 182–186 (LAIDY) lie on the Extracellular side of the membrane. The stretch at 187–199 (TGCGINPARSFGS) is an intramembrane region. The NPA 2 signature appears at 192–194 (NPA). The Extracellular portion of the chain corresponds to 200–206 (AVLTRNF). An N-linked (GlcNAc...) asparagine glycan is attached at Asn205. Residues 207 to 224 (SNHWIFWVGPFIGSALAV) form a helical membrane-spanning segment. At 225-269 (LIYDFILAPRSSDFTDRMKVWTSGQVEEYDLDADDINSRVEMKPK) the chain is on the cytoplasmic side. Ser247 carries the phosphoserine modification. Position 253 is a phosphotyrosine (Tyr253). Ser262 carries the post-translational modification Phosphoserine.

The protein belongs to the MIP/aquaporin (TC 1.A.8) family. As to quaternary structure, homotetramer; each monomer provides an independent water pore. Component of the ankyrin-1 complex in the erythrocyte, composed of ANK1, RHCE, RHAG, SLC4A1, EPB42, GYPA, GYPB and AQP1. Interacts with EPHB2; involved in endolymph production in the inner ear. Identified in a complex with STOM. Interacts (via the N-terminal) with ANK1 (via ANK 1-5 repeats). Interacts (via the C-terminal) with EPB42. In terms of tissue distribution, erythrocytes and renal tubules.

The protein localises to the cell membrane. It catalyses the reaction H2O(in) = H2O(out). The enzyme catalyses nitric oxide(out) = nitric oxide(in). It carries out the reaction CO2(out) = CO2(in). The catalysed reaction is glycerol(in) = glycerol(out). It catalyses the reaction H2O2(out) = H2O2(in). The enzyme catalyses K(+)(in) = K(+)(out). It carries out the reaction Na(+)(in) = Na(+)(out). Its function is as follows. Forms a water channel that facilitates the transport of water across cell membranes, playing a crucial role in water homeostasis in various tissues. Could also be permeable to small solutes including hydrogen peroxide, glycerol and gases such as amonnia (NH3), nitric oxide (NO) and carbon dioxide (CO2). Recruited to the ankyrin-1 complex, a multiprotein complex of the erythrocyte membrane, it could be part of a CO2 metabolon, linking facilitated diffusion of CO2 across the membrane, anion exchange of Cl(-)/HCO3(-) and interconversion of dissolved CO2 and carbonic acid in the cytosol. In vitro, it shows non-selective gated cation channel activity and may be permeable to cations like K(+) and Na(+) in vivo. In Rattus norvegicus (Rat), this protein is Aquaporin-1.